Consider the following 345-residue polypeptide: Tetraacyldisaccharide 4'-kinase (345 aa).

54 to 61 contributes to the ATP binding site; it reads TLGGAGKT.

It belongs to the LpxK family.

It catalyses the reaction a lipid A disaccharide + ATP = a lipid IVA + ADP + H(+). It participates in glycolipid biosynthesis; lipid IV(A) biosynthesis; lipid IV(A) from (3R)-3-hydroxytetradecanoyl-[acyl-carrier-protein] and UDP-N-acetyl-alpha-D-glucosamine: step 6/6. Transfers the gamma-phosphate of ATP to the 4'-position of a tetraacyldisaccharide 1-phosphate intermediate (termed DS-1-P) to form tetraacyldisaccharide 1,4'-bis-phosphate (lipid IVA). The polypeptide is Tetraacyldisaccharide 4'-kinase (Allorhizobium ampelinum (strain ATCC BAA-846 / DSM 112012 / S4) (Agrobacterium vitis (strain S4))).